We begin with the raw amino-acid sequence, 173 residues long: Inorganic pyrophosphatase (173 aa).

Positions 28, 42, and 54 each coordinate substrate. Asp64, Asp69, and Asp101 together coordinate Mg(2+). Tyr140 serves as a coordination point for substrate.

Belongs to the PPase family. As to quaternary structure, homohexamer. Mg(2+) is required as a cofactor.

It localises to the cytoplasm. The catalysed reaction is diphosphate + H2O = 2 phosphate + H(+). Its function is as follows. Catalyzes the hydrolysis of inorganic pyrophosphate (PPi) forming two phosphate ions. This Helicobacter pylori (strain J99 / ATCC 700824) (Campylobacter pylori J99) protein is Inorganic pyrophosphatase.